The primary structure comprises 197 residues: Holliday junction branch migration complex subunit RuvA (197 aa).

Positions 1-64 are domain I; the sequence is MIDSIVGIIQ…LSELECYGFL (64 aa). The domain II stretch occupies residues 65–143; the sequence is TREERELFLK…KEFKVASTSG (79 aa). Positions 144–152 are flexible linker; that stretch reads KEEKTYEKL. The segment at 152–197 is domain III; sequence LEEISLALLSLGYDIDEVNQVLSSEDFSELSLEDGIKLALKKLSKI.

It belongs to the RuvA family. In terms of assembly, homotetramer. Forms an RuvA(8)-RuvB(12)-Holliday junction (HJ) complex. HJ DNA is sandwiched between 2 RuvA tetramers; dsDNA enters through RuvA and exits via RuvB. An RuvB hexamer assembles on each DNA strand where it exits the tetramer. Each RuvB hexamer is contacted by two RuvA subunits (via domain III) on 2 adjacent RuvB subunits; this complex drives branch migration. In the full resolvosome a probable DNA-RuvA(4)-RuvB(12)-RuvC(2) complex forms which resolves the HJ.

It localises to the cytoplasm. Its function is as follows. The RuvA-RuvB-RuvC complex processes Holliday junction (HJ) DNA during genetic recombination and DNA repair, while the RuvA-RuvB complex plays an important role in the rescue of blocked DNA replication forks via replication fork reversal (RFR). RuvA specifically binds to HJ cruciform DNA, conferring on it an open structure. The RuvB hexamer acts as an ATP-dependent pump, pulling dsDNA into and through the RuvAB complex. HJ branch migration allows RuvC to scan DNA until it finds its consensus sequence, where it cleaves and resolves the cruciform DNA. This chain is Holliday junction branch migration complex subunit RuvA, found in Caldicellulosiruptor bescii (strain ATCC BAA-1888 / DSM 6725 / KCTC 15123 / Z-1320) (Anaerocellum thermophilum).